The sequence spans 253 residues: Imidazole glycerol phosphate synthase subunit HisF (253 aa).

Residues D11 and D130 contribute to the active site.

Belongs to the HisA/HisF family. As to quaternary structure, heterodimer of HisH and HisF.

It localises to the cytoplasm. It catalyses the reaction 5-[(5-phospho-1-deoxy-D-ribulos-1-ylimino)methylamino]-1-(5-phospho-beta-D-ribosyl)imidazole-4-carboxamide + L-glutamine = D-erythro-1-(imidazol-4-yl)glycerol 3-phosphate + 5-amino-1-(5-phospho-beta-D-ribosyl)imidazole-4-carboxamide + L-glutamate + H(+). It functions in the pathway amino-acid biosynthesis; L-histidine biosynthesis; L-histidine from 5-phospho-alpha-D-ribose 1-diphosphate: step 5/9. Functionally, IGPS catalyzes the conversion of PRFAR and glutamine to IGP, AICAR and glutamate. The HisF subunit catalyzes the cyclization activity that produces IGP and AICAR from PRFAR using the ammonia provided by the HisH subunit. In Dehalococcoides mccartyi (strain ATCC BAA-2100 / JCM 16839 / KCTC 5957 / BAV1), this protein is Imidazole glycerol phosphate synthase subunit HisF.